A 522-amino-acid polypeptide reads, in one-letter code: Response regulator mcs4 (522 aa).

Residues 148-274 are disordered; that stretch reads DSLESPVSAP…RSISHSSLYT (127 aa). The segment covering 174 to 194 has biased composition (polar residues); it reads NLRNASRTRSHQTLPSSNVNK. Positions 244 to 255 are enriched in basic and acidic residues; sequence RSDESTAEKLAK. Polar residues predominate over residues 260–274; that stretch reads TPTNSRSISHSSLYT. The Response regulatory domain maps to 363–505; that stretch reads NVLIVEDNII…WLEKKITEWG (143 aa). Asp412 bears the 4-aspartylphosphate mark.

It localises to the cytoplasm. Its function is as follows. Response regulator that coordinately controls the stress activated wak1-wis1-sty1 MAP kinase pathway and fission yeast cell cycle. The chain is Response regulator mcs4 (mcs4) from Schizosaccharomyces pombe (strain 972 / ATCC 24843) (Fission yeast).